Here is a 325-residue protein sequence, read N- to C-terminus: Ribosomal large subunit pseudouridine synthase D (325 aa).

Residues 18–78 form the S4 RNA-binding domain; the sequence is YRLDQALAQL…AEIEEEIRFE (61 aa). The active site involves Asp-139.

It belongs to the pseudouridine synthase RluA family.

It localises to the cytoplasm. It catalyses the reaction uridine(1911/1915/1917) in 23S rRNA = pseudouridine(1911/1915/1917) in 23S rRNA. Responsible for synthesis of pseudouridine from uracil at positions 1911, 1915 and 1917 in 23S ribosomal RNA. The polypeptide is Ribosomal large subunit pseudouridine synthase D (rluD) (Haemophilus ducreyi (strain 35000HP / ATCC 700724)).